We begin with the raw amino-acid sequence, 175 residues long: SKP1-like protein 20 (175 aa).

Residues 117–175 (ILAANYLNIKGLLDLTCQTVADMIKGKTPEEIRKTFNIKNDFTPEEEEEVRRENQWAFE) are interaction with the F-box domain of F-box proteins.

This sequence belongs to the SKP1 family. Part of a SCF (SKP1-CUL1-F-box protein) E3 ubiquitin-protein ligase complex. Interacts with rice black streaked dwarf virus RBSDV protein P7-2. Is able to form the SCF complex together with CUL1 and the viral P7-2 protein. Interacts with D3.

The protein localises to the nucleus. It participates in protein modification; protein ubiquitination. Its function is as follows. Involved in ubiquitination and subsequent proteasomal degradation of target proteins. Together with CUL1, a RING-box and a F-box protein, it forms a SCF E3 ubiquitin ligase complex. The functional specificity of this complex depends on the type of F-box protein. In the SCF complex, it serves as an adapter that links the F-box protein to CUL1. This chain is SKP1-like protein 20, found in Oryza sativa subsp. japonica (Rice).